A 318-amino-acid polypeptide reads, in one-letter code: Trans-prenyltransferase (318 aa).

Residues methionine 1–threonine 21 form a helical membrane-spanning segment. Residues lysine 85, arginine 88, and histidine 122 each contribute to the isopentenyl diphosphate site. Mg(2+) contacts are provided by aspartate 129 and aspartate 135. Arginine 140 lines the dimethylallyl diphosphate pocket. Arginine 141 lines the isopentenyl diphosphate pocket. Residues lysine 216, threonine 217, and glutamine 254 each coordinate dimethylallyl diphosphate.

Belongs to the FPP/GGPP synthase family. Asfivirus trans-prenyltransferase subfamily. Requires Mg(2+) as cofactor.

The protein localises to the host endoplasmic reticulum. The protein resides in the host membrane. The enzyme catalyses isopentenyl diphosphate + dimethylallyl diphosphate = (2E)-geranyl diphosphate + diphosphate. It carries out the reaction isopentenyl diphosphate + (2E)-geranyl diphosphate = (2E,6E)-farnesyl diphosphate + diphosphate. The catalysed reaction is isopentenyl diphosphate + (2E,6E)-farnesyl diphosphate = (2E,6E,10E)-geranylgeranyl diphosphate + diphosphate. It catalyses the reaction isopentenyl diphosphate + (2E,6E,10E)-geranylgeranyl diphosphate = (2E,6E,10E,14E)-geranylfarnesyl diphosphate + diphosphate. It functions in the pathway isoprenoid biosynthesis; farnesyl diphosphate biosynthesis; farnesyl diphosphate from geranyl diphosphate and isopentenyl diphosphate: step 1/1. The protein operates within isoprenoid biosynthesis; geranyl diphosphate biosynthesis; geranyl diphosphate from dimethylallyl diphosphate and isopentenyl diphosphate: step 1/1. It participates in isoprenoid biosynthesis; geranylgeranyl diphosphate biosynthesis; geranylgeranyl diphosphate from farnesyl diphosphate and isopentenyl diphosphate: step 1/1. Its function is as follows. Trans-prenyltransferase that catalyzes the sequential condensation of isopentenyl diphosphate (IPP) with different allylic diphosphates, such as dimethylallyl diphosphate (DMAPP), geranyl diphosphate (GPP), farnesyl diphosphate (FPP) and geranylgeranyl diphosphate (GGPP), farnesyl diphosphate being the best allylic substrate. In African swine fever virus (isolate Tick/Malawi/Lil 20-1/1983) (ASFV), this protein is Trans-prenyltransferase.